Here is a 1059-residue protein sequence, read N- to C-terminus: Carbamoyl phosphate synthase large chain (1059 aa).

Positions 1–401 are carboxyphosphate synthetic domain; it reads MPKRSDIKKI…SLLKACRSLE (401 aa). 12 residues coordinate ATP: Arg-129, Arg-169, Gly-175, Gly-176, Arg-208, Ile-210, Glu-215, Gly-241, Ile-242, His-243, Gln-284, and Glu-298. The ATP-grasp 1 domain occupies 133–327; sequence KQLMEELEQP…IAKLAAKIAV (195 aa). 3 residues coordinate Mg(2+): Gln-284, Glu-298, and Asn-300. Residues Gln-284, Glu-298, and Asn-300 each contribute to the Mn(2+) site. Positions 402 to 546 are oligomerization domain; that stretch reads IGVYHNEMSE…YSTYEWENES (145 aa). The interval 547 to 929 is carbamoyl phosphate synthetic domain; it reads IKSDKESVIV…ALYKAFEASY (383 aa). In terms of domain architecture, ATP-grasp 2 spans 671 to 861; it reads EQALKDLDIP…MAQVATNLIL (191 aa). ATP is bound by residues Arg-707, Ser-746, Ile-748, Glu-752, Gly-777, Val-778, His-779, Ser-780, Gln-820, and Glu-832. Residues Gln-820, Glu-832, and Asn-834 each coordinate Mg(2+). Gln-820, Glu-832, and Asn-834 together coordinate Mn(2+). The region spanning 930 to 1059 is the MGS-like domain; the sequence is LHLPTFGNVI…ESRSFTTEAI (130 aa). The tract at residues 930–1059 is allosteric domain; it reads LHLPTFGNVI…ESRSFTTEAI (130 aa).

This sequence belongs to the CarB family. Composed of two chains; the small (or glutamine) chain promotes the hydrolysis of glutamine to ammonia, which is used by the large (or ammonia) chain to synthesize carbamoyl phosphate. Tetramer of heterodimers (alpha,beta)4. Mg(2+) is required as a cofactor. Mn(2+) serves as cofactor.

The catalysed reaction is hydrogencarbonate + L-glutamine + 2 ATP + H2O = carbamoyl phosphate + L-glutamate + 2 ADP + phosphate + 2 H(+). It carries out the reaction hydrogencarbonate + NH4(+) + 2 ATP = carbamoyl phosphate + 2 ADP + phosphate + 2 H(+). It participates in amino-acid biosynthesis; L-arginine biosynthesis; carbamoyl phosphate from bicarbonate: step 1/1. The protein operates within pyrimidine metabolism; UMP biosynthesis via de novo pathway; (S)-dihydroorotate from bicarbonate: step 1/3. Its function is as follows. Large subunit of the glutamine-dependent carbamoyl phosphate synthetase (CPSase). CPSase catalyzes the formation of carbamoyl phosphate from the ammonia moiety of glutamine, carbonate, and phosphate donated by ATP, constituting the first step of 2 biosynthetic pathways, one leading to arginine and/or urea and the other to pyrimidine nucleotides. The large subunit (synthetase) binds the substrates ammonia (free or transferred from glutamine from the small subunit), hydrogencarbonate and ATP and carries out an ATP-coupled ligase reaction, activating hydrogencarbonate by forming carboxy phosphate which reacts with ammonia to form carbamoyl phosphate. The polypeptide is Carbamoyl phosphate synthase large chain (Streptococcus thermophilus (strain ATCC BAA-250 / LMG 18311)).